The chain runs to 241 residues: MASHRPRSNKAANGASTSPKRSWIIVSAALVGFCALIAALDSIRSSFYIFDHKAIYKIASTAVANHPGNATAIFDDVLDNLRADPKLAPYINKNHFSDESEWMFNNAGGAMGSMFIIHASVTEYLIFFGTPVGTEGHTGRHTADDYFNILTGNQYAFPAGALKAEHYPAGSVHHLRRGTVKQYMMPEDGCWALELAQGWIPPMLPFGLADVLSSTLDLPTFGITVWITAREMVGNLLIGKF.

Residues 23–43 (WIIVSAALVGFCALIAALDSI) form a helical membrane-spanning segment.

This sequence belongs to the ERG2 family.

It localises to the endoplasmic reticulum membrane. Its pathway is steroid metabolism; ergosterol biosynthesis; ergosterol from zymosterol: step 2/5. Functionally, catalyzes the reaction which results in unsaturation at C-7 in the B ring of sterols. The protein is C-8 sterol isomerase (ERG2) of Mycosarcoma maydis (Corn smut fungus).